The primary structure comprises 326 residues: Protein LEG1 homolog (326 aa).

An N-terminal signal peptide occupies residues 1-22 (MKSNKTIFLILLFLINFNSIYS). N-linked (GlcNAc...) asparagine glycosylation is found at Asn58, Asn85, Asn165, Asn226, and Asn245.

Belongs to the LEG1 family.

It localises to the secreted. This Dictyostelium discoideum (Social amoeba) protein is Protein LEG1 homolog.